An 81-amino-acid polypeptide reads, in one-letter code: Photosystem I iron-sulfur center (81 aa).

4Fe-4S ferredoxin-type domains follow at residues 2 to 31 (SHSV…MVPW) and 37 to 68 (GQIA…VRVY). Positions 11, 14, 17, 21, 48, 51, 54, and 58 each coordinate [4Fe-4S] cluster.

As to quaternary structure, the cyanobacterial PSI reaction center is composed of one copy each of PsaA,B,C,D,E,F,I,J,K,L,M and X, and forms trimeric complexes. Requires [4Fe-4S] cluster as cofactor.

Its subcellular location is the cellular thylakoid membrane. It carries out the reaction reduced [plastocyanin] + hnu + oxidized [2Fe-2S]-[ferredoxin] = oxidized [plastocyanin] + reduced [2Fe-2S]-[ferredoxin]. Apoprotein for the two 4Fe-4S centers FA and FB of photosystem I (PSI); essential for photochemical activity. FB is the terminal electron acceptor of PSI, donating electrons to ferredoxin. The C-terminus interacts with PsaA/B/D and helps assemble the protein into the PSI complex. Required for binding of PsaD and PsaE to PSI. PSI is a plastocyanin/cytochrome c6-ferredoxin oxidoreductase, converting photonic excitation into a charge separation, which transfers an electron from the donor P700 chlorophyll pair to the spectroscopically characterized acceptors A0, A1, FX, FA and FB in turn. The polypeptide is Photosystem I iron-sulfur center (Prochlorococcus marinus (strain SARG / CCMP1375 / SS120)).